The sequence spans 300 residues: Bifunctional protein FolD (300 aa).

Residues 168–170, Ser-193, and Ile-234 each bind NADP(+); that span reads GRS.

This sequence belongs to the tetrahydrofolate dehydrogenase/cyclohydrolase family. As to quaternary structure, homodimer.

It catalyses the reaction (6R)-5,10-methylene-5,6,7,8-tetrahydrofolate + NADP(+) = (6R)-5,10-methenyltetrahydrofolate + NADPH. The enzyme catalyses (6R)-5,10-methenyltetrahydrofolate + H2O = (6R)-10-formyltetrahydrofolate + H(+). It functions in the pathway one-carbon metabolism; tetrahydrofolate interconversion. Its function is as follows. Catalyzes the oxidation of 5,10-methylenetetrahydrofolate to 5,10-methenyltetrahydrofolate and then the hydrolysis of 5,10-methenyltetrahydrofolate to 10-formyltetrahydrofolate. This is Bifunctional protein FolD from Ehrlichia canis (strain Jake).